Here is a 276-residue protein sequence, read N- to C-terminus: MNYQHWLSLAAARFTHSDSPKRDAEILLSFVTGKARTYLLAFGETEITAEQLLWLETLANRREQGEPIAYLVGEREFWSLPLSVSSATLIPRPDTECLVEQALARLPAMPCRILDLGTGTGAIALALATERRDCAVIAVDINADAVALARHNAEKLTIDNVCFLQGSWFEPVSGRFALIASNPPYIDANDPHLNEGDVRYEPHSALVAAAEGMADLAAIVSQAPGYLDPGGWLMLEHGWQQANAVQELLKNSGFSAVMTCKDYGNNDRVTLGQWAV.

Residues 117 to 121 (GTGTG), aspartate 140, tryptophan 168, and asparagine 182 contribute to the S-adenosyl-L-methionine site. Position 182–185 (182–185 (NPPY)) interacts with substrate.

This sequence belongs to the protein N5-glutamine methyltransferase family. PrmC subfamily.

The enzyme catalyses L-glutaminyl-[peptide chain release factor] + S-adenosyl-L-methionine = N(5)-methyl-L-glutaminyl-[peptide chain release factor] + S-adenosyl-L-homocysteine + H(+). Its function is as follows. Methylates the class 1 translation termination release factors RF1/PrfA and RF2/PrfB on the glutamine residue of the universally conserved GGQ motif. The sequence is that of Release factor glutamine methyltransferase from Yersinia pestis.